We begin with the raw amino-acid sequence, 223 residues long: MRLVIAQCTVDYVGRLTAHLPSARRLLLFKADGSVSVHADDRAYKPLNWMSPPCWIVEPTDGDATVWVVENKAGEQLRITVEAIEHDSSHELGVDPGLVKDGVEAHLQALLAEHVELLGAGYTLVRREYMTPIGPVDLLCRDEQGRSVAVEIKRRGEIDGVEQLTRYLELLNRDSLLAPVAGVFAAQQIKPQARTLATDRGIRCLTLDYDKMRGMDNDEFRLF.

The protein belongs to the NucS endonuclease family.

It localises to the cytoplasm. Functionally, cleaves both 3' and 5' ssDNA extremities of branched DNA structures. The sequence is that of Endonuclease NucS from Mycolicibacterium vanbaalenii (strain DSM 7251 / JCM 13017 / BCRC 16820 / KCTC 9966 / NRRL B-24157 / PYR-1) (Mycobacterium vanbaalenii).